The sequence spans 590 residues: Aspartate--tRNA ligase (590 aa).

Residue Glu175 coordinates L-aspartate. An aspartate region spans residues 199 to 202; the sequence is QIFK. Arg221 contacts L-aspartate. Residues 221–223 and Gln230 each bind ATP; that span reads RDE. An L-aspartate-binding site is contributed by His449. Glu483 contributes to the ATP binding site. Arg490 contributes to the L-aspartate binding site. Residue 535–538 participates in ATP binding; sequence GLDR.

This sequence belongs to the class-II aminoacyl-tRNA synthetase family. Type 1 subfamily. As to quaternary structure, homodimer.

It is found in the cytoplasm. It carries out the reaction tRNA(Asp) + L-aspartate + ATP = L-aspartyl-tRNA(Asp) + AMP + diphosphate. Its function is as follows. Catalyzes the attachment of L-aspartate to tRNA(Asp) in a two-step reaction: L-aspartate is first activated by ATP to form Asp-AMP and then transferred to the acceptor end of tRNA(Asp). This chain is Aspartate--tRNA ligase, found in Geobacillus kaustophilus (strain HTA426).